The primary structure comprises 512 residues: uncharacterized protein (512 aa).

12 helical membrane passes run 25–45 (GFYT…VICA), 55–75 (LLYP…PLIL), 96–116 (LVVC…VFLA), 123–143 (VVTG…LPAV), 148–168 (LLLT…LVIV), 183–203 (LLWL…FVGP), 238–258 (MTTY…SLRA), 263–283 (GSLH…SMLW), 294–314 (GLLL…MVAE), 329–349 (FLLA…WISV), 359–379 (LICV…VALG), and 386–406 (ATIW…VASL). A disordered region spans residues 428–512 (YRPATPNPIH…APLDAGQRIA (85 aa)).

It localises to the cell membrane. This is an uncharacterized protein from Mycobacterium tuberculosis (strain CDC 1551 / Oshkosh).